Here is a 242-residue protein sequence, read N- to C-terminus: Ubiquinone biosynthesis O-methyltransferase (242 aa).

The S-adenosyl-L-methionine site is built by R44, G64, D85, and M129.

This sequence belongs to the methyltransferase superfamily. UbiG/COQ3 family.

It catalyses the reaction a 3-demethylubiquinol + S-adenosyl-L-methionine = a ubiquinol + S-adenosyl-L-homocysteine + H(+). The enzyme catalyses a 3-(all-trans-polyprenyl)benzene-1,2-diol + S-adenosyl-L-methionine = a 2-methoxy-6-(all-trans-polyprenyl)phenol + S-adenosyl-L-homocysteine + H(+). Its pathway is cofactor biosynthesis; ubiquinone biosynthesis. Its function is as follows. O-methyltransferase that catalyzes the 2 O-methylation steps in the ubiquinone biosynthetic pathway. This chain is Ubiquinone biosynthesis O-methyltransferase, found in Salmonella paratyphi A (strain ATCC 9150 / SARB42).